The sequence spans 274 residues: Large ribosomal subunit protein uL2 (274 aa).

The segment at 220–265 (VRGAAMNPRDHPHGGGEGRAPRGMSTPKTKWGKPARGVKTRHNPRF) is disordered. The segment covering 227–239 (PRDHPHGGGEGRA) has biased composition (basic and acidic residues). Residues 249–262 (KWGKPARGVKTRHN) show a composition bias toward basic residues.

It belongs to the universal ribosomal protein uL2 family. Part of the 50S ribosomal subunit. Forms a bridge to the 30S subunit in the 70S ribosome.

Its function is as follows. One of the primary rRNA binding proteins. Required for association of the 30S and 50S subunits to form the 70S ribosome, for tRNA binding and peptide bond formation. It has been suggested to have peptidyltransferase activity; this is somewhat controversial. Makes several contacts with the 16S rRNA in the 70S ribosome. The protein is Large ribosomal subunit protein uL2 of Chloroflexus aurantiacus (strain ATCC 29364 / DSM 637 / Y-400-fl).